The sequence spans 400 residues: Phosphoglycerate kinase (400 aa).

Residues 22-24, Arg37, 60-63, Arg119, and Arg159 each bind substrate; these read DLN and HLGR. Residues Lys209, Gly297, Glu328, and 354 to 357 each bind ATP; that span reads GGDS.

Belongs to the phosphoglycerate kinase family. Monomer.

It localises to the cytoplasm. The catalysed reaction is (2R)-3-phosphoglycerate + ATP = (2R)-3-phospho-glyceroyl phosphate + ADP. Its pathway is carbohydrate degradation; glycolysis; pyruvate from D-glyceraldehyde 3-phosphate: step 2/5. The sequence is that of Phosphoglycerate kinase from Saccharopolyspora erythraea (strain ATCC 11635 / DSM 40517 / JCM 4748 / NBRC 13426 / NCIMB 8594 / NRRL 2338).